An 81-amino-acid chain; its full sequence is Large ribosomal subunit protein bL31B (81 aa).

This sequence belongs to the bacterial ribosomal protein bL31 family. Type B subfamily. In terms of assembly, part of the 50S ribosomal subunit.

In Listeria innocua serovar 6a (strain ATCC BAA-680 / CLIP 11262), this protein is Large ribosomal subunit protein bL31B.